Consider the following 260-residue polypeptide: Flap endonuclease Xni (260 aa).

Aspartate 109 provides a ligand contact to Mg(2+). The 5'-3' exonuclease domain occupies 165–259; sequence VKPSQLADYW…DIRFTGPNKA (95 aa). Residues leucine 176, proline 185, valine 187, and valine 190 each coordinate K(+). Residues 189–194 are interaction with DNA; sequence GVGPKA.

The protein belongs to the Xni family. It depends on Mg(2+) as a cofactor. The cofactor is K(+).

Its function is as follows. Has flap endonuclease activity. During DNA replication, flap endonucleases cleave the 5'-overhanging flap structure that is generated by displacement synthesis when DNA polymerase encounters the 5'-end of a downstream Okazaki fragment. This is Flap endonuclease Xni from Vibrio campbellii (strain ATCC BAA-1116).